The primary structure comprises 267 residues: MYADRDLPGAGGLAVRVIPCLDVDDGRVVKGVNFENLRDAGDPVELAAVYDAEGADELTFLDVTASSSGRATMLEVVRRTAEQVFIPLTVGGGVRTVADVDSLLRAGADKVAVNTAAIACPDLLADMARQFGSQCIVLSVDARTVPVGSAPTPSGWEVTTHGGRRGTGMDAVQWAARGADLGVGEILLNSMDADGTKAGFDLALLRAVRAAVTVPVIASGGAGAVEHFAPAVAAGADAVLAASVFHFRELTIGQVKAALAAEGITVR.

Catalysis depends on residues Asp22 and Asp141.

Belongs to the HisA/HisF family. Heterodimer of HisH and HisF.

It localises to the cytoplasm. It carries out the reaction 5-[(5-phospho-1-deoxy-D-ribulos-1-ylimino)methylamino]-1-(5-phospho-beta-D-ribosyl)imidazole-4-carboxamide + L-glutamine = D-erythro-1-(imidazol-4-yl)glycerol 3-phosphate + 5-amino-1-(5-phospho-beta-D-ribosyl)imidazole-4-carboxamide + L-glutamate + H(+). It functions in the pathway amino-acid biosynthesis; L-histidine biosynthesis; L-histidine from 5-phospho-alpha-D-ribose 1-diphosphate: step 5/9. In terms of biological role, IGPS catalyzes the conversion of PRFAR and glutamine to IGP, AICAR and glutamate. The HisF subunit catalyzes the cyclization activity that produces IGP and AICAR from PRFAR using the ammonia provided by the HisH subunit. The polypeptide is Imidazole glycerol phosphate synthase subunit HisF (Mycobacterium tuberculosis (strain ATCC 25177 / H37Ra)).